We begin with the raw amino-acid sequence, 154 residues long: Methylglyoxal synthase (154 aa).

The MGS-like domain occupies 6 to 154 (SPLPANKAIA…AYMARRAQGN (149 aa)). Residues His19, Lys23, 45-48 (TGTT), and 65-66 (SG) each bind substrate. Asp71 functions as the Proton donor/acceptor in the catalytic mechanism. His98 contacts substrate.

It belongs to the methylglyoxal synthase family.

It carries out the reaction dihydroxyacetone phosphate = methylglyoxal + phosphate. In terms of biological role, catalyzes the formation of methylglyoxal from dihydroxyacetone phosphate. This chain is Methylglyoxal synthase, found in Cellvibrio japonicus (strain Ueda107) (Pseudomonas fluorescens subsp. cellulosa).